The primary structure comprises 71 residues: Small ribosomal subunit protein bS21 (71 aa).

The protein belongs to the bacterial ribosomal protein bS21 family.

This Shewanella sp. (strain MR-4) protein is Small ribosomal subunit protein bS21.